The primary structure comprises 225 residues: MNTSLTNAARLFTAGLRALLVLTVVTGIVYPLVVTGVAQGLFPGKANGSEIKADGKVVGSSLIGQSYNLPLKEGRETPEPDLRWFQGRPANGLGTNTVNTRYELILSGATNRSADDPELLQWVQDAKAAVVRDNSVPGHPVRPEDVPADAVTSSGSGLDPDISPRYADLQVHRVAAKNGLPAERVQELVDEHTTPRTLGFIGEPRVNVLELNIALVELVAPGAGH.

The chain crosses the membrane as a helical span at residues 18-38; that stretch reads ALLVLTVVTGIVYPLVVTGVA. The tract at residues 134 to 161 is disordered; it reads NSVPGHPVRPEDVPADAVTSSGSGLDPD.

This sequence belongs to the KdpC family. The system is composed of three essential subunits: KdpA, KdpB and KdpC.

The protein resides in the cell membrane. Its function is as follows. Part of the high-affinity ATP-driven potassium transport (or Kdp) system, which catalyzes the hydrolysis of ATP coupled with the electrogenic transport of potassium into the cytoplasm. This subunit acts as a catalytic chaperone that increases the ATP-binding affinity of the ATP-hydrolyzing subunit KdpB by the formation of a transient KdpB/KdpC/ATP ternary complex. This is Potassium-transporting ATPase KdpC subunit from Streptomyces coelicolor (strain ATCC BAA-471 / A3(2) / M145).